The primary structure comprises 523 residues: Sorting nexin-2 (523 aa).

Residues 1–104 (MAAEREPPPL…EPSPAVTPVT (104 aa)) are disordered. 2 stretches are compositionally biased toward low complexity: residues 27-50 (LFTS…LPAE) and 93-104 (SSEPSPAVTPVT). Ser-97 is subject to Phosphoserine. Thr-101 and Thr-104 each carry phosphothreonine. Phosphoserine occurs at positions 117 and 119. Positions 140–269 (FDIEIGVSDP…QFLESSELPR (130 aa)) constitute a PX domain. A 1,2-diacyl-sn-glycero-3-phospho-(1D-myo-inositol-3-phosphate)-binding residues include Arg-183, Ser-185, Lys-211, and Arg-235. The residue at position 185 (Ser-185) is a Phosphoserine. The tract at residues 260–523 (QFLESSELPR…AFLPEAKAIA (264 aa)) is interaction with RhoG. Ser-277 carries the post-translational modification Phosphoserine. The interval 278-295 (GAGILRMVNKAADAVNKM) is membrane-binding amphipathic helix. Positions 299-523 (MNESDAWFEE…AFLPEAKAIA (225 aa)) constitute a BAR domain. Residue Lys-473 is modified to N6-acetyllysine.

It belongs to the sorting nexin family. As to quaternary structure, predominantly forms heterodimers with BAR domain-containing sorting nexins SNX5, SNX6 and SNX32; can self-associate to form homodimers. The heterodimers are proposed to self-assemble into helical arrays on the membrane to stabilize and expand local membrane curvature underlying endosomal tubule formation. Thought to be a component of the originally described retromer complex (also called SNX-BAR retromer) which is a pentamer containing the heterotrimeric retromer cargo-selective complex (CSC), also described as vacuolar protein sorting subcomplex (VPS), and a heterodimeric membrane-deforming subcomplex formed between SNX1 or SNX2 and SNX5 or SNX6 (also called SNX-BAR subcomplex); the respective CSC and SNX-BAR subcomplexes associate with low affinity. Interacts with SNX5, SNX6, SNX32, VPS26A, VPS29, VPS35, FNBP1, KALRN, RHOG (GDP-bound form).

It is found in the early endosome membrane. The protein localises to the cell projection. Its subcellular location is the lamellipodium. Functionally, involved in several stages of intracellular trafficking. Interacts with membranes containing phosphatidylinositol 3-phosphate (PtdIns(3P)) or phosphatidylinositol 3,5-bisphosphate (PtdIns(3,5)P2). Acts in part as component of the retromer membrane-deforming SNX-BAR subcomplex. The SNX-BAR retromer mediates retrograde transport of cargo proteins from endosomes to the trans-Golgi network (TGN) and is involved in endosome-to-plasma membrane transport for cargo protein recycling. The SNX-BAR subcomplex functions to deform the donor membrane into a tubular profile called endosome-to-TGN transport carrier (ETC). Can sense membrane curvature and has in vitro vesicle-to-membrane remodeling activity. Required for retrograde endosome-to-TGN transport of TGN38. Promotes KALRN- and RHOG-dependent but retromer-independent membrane remodeling such as lamellipodium formation; the function is dependent on GEF activity of KALRN. The chain is Sorting nexin-2 (SNX2) from Macaca fascicularis (Crab-eating macaque).